The following is a 725-amino-acid chain: NAD(+) hydrolase SARM1 (725 aa).

The transit peptide at 1-27 directs the protein to the mitochondrion; the sequence is MVLTILFSAYKLCRFFAMSSPRPGAER. An ARM 1 repeat occupies 60–100; it reads EVQGALERALPELQQALSALKQAGGGRAVGAGLAEVFQLVE. NAD(+) is bound by residues W103, R110, 149 to 158, and 191 to 194; these read EQILVAENRR and HMFK. 7 ARM repeats span residues 114–153, 155–194, 197–236, 238–281, 282–315, 316–355, and 360–403; these read QGLC…QILV, ENRR…HMFK, EETC…NCAM, GGQA…LATN, KEVE…CLVD, ASDT…AEAV, and KNRN…EEVP. SAM domains follow at residues 413–477 and 483–549; these read WKEA…LKTF and CDRS…MLHS. Phosphoserine is present on residues S549 and S559. The 144-residue stretch at 561–704 folds into the TIR domain; the sequence is DVPDVFISYR…KIIRFLQGRS (144 aa). NAD(+)-binding positions include 570–571 and E600; that span reads RR. Residue E643 is part of the active site. Residues 705-725 are disordered; that stretch reads SRDSSAGSDTSLEGAAPMGPT.

It belongs to the SARM1 family. As to quaternary structure, homooctamer; forms an octameric ring via SAM domains. Interacts with TICAM1/TRIF and thereby interferes with TICAM1/TRIF function. Interacts with MAPK10/JNK3 and SDC2 (via cytoplasmic domain). Post-translationally, phosphorylation at Ser-549 by JNK kinases (MAPK8, MAPK9 and /or MAPK10) enhance the NAD(+) hydrolase (NADase) activity. Phosphorylation at Ser-549 and subsequent activation takes place in response to oxidative stress conditions and inhibits mitochondrial respiration. In terms of tissue distribution, highest expression seen in the spleen and the brain, followed by lung, kidney, liver and other tissues.

It localises to the cytoplasm. It is found in the cell projection. The protein resides in the axon. The protein localises to the dendrite. Its subcellular location is the synapse. It localises to the mitochondrion. The enzyme catalyses NAD(+) + H2O = ADP-D-ribose + nicotinamide + H(+). It carries out the reaction NAD(+) = cyclic ADP-beta-D-ribose + nicotinamide + H(+). The catalysed reaction is NADP(+) + H2O = ADP-D-ribose 2'-phosphate + nicotinamide + H(+). Autoinhibited: in the inactive state, the enzymatic TIR domain is held apart by the autoinhibiting ARM repeats. NAD(+)-binding to ARM repeats maintains an inactive state by promoting interaction between ARM repeats and the TIR domain, thereby facilitating inhibition of the enzymatic TIR domain. Following activation, possibly by nicotinamide mononucleotide (NMN), auto-inhibitory interactions are released, allowing self-association of the TIR domains and subsequent activation of the NAD(+) hydrolase (NADase) activity. Self-association of TIR domains is facilitated by the octamer of SAM domains. NAD(+) hydrolase, which plays a key role in axonal degeneration following injury by regulating NAD(+) metabolism. Acts as a negative regulator of MYD88- and TRIF-dependent toll-like receptor signaling pathway by promoting Wallerian degeneration, an injury-induced form of programmed subcellular death which involves degeneration of an axon distal to the injury site. Wallerian degeneration is triggered by NAD(+) depletion: in response to injury, SARM1 is activated and catalyzes cleavage of NAD(+) into ADP-D-ribose (ADPR), cyclic ADPR (cADPR) and nicotinamide; NAD(+) cleavage promoting cytoskeletal degradation and axon destruction. Also able to hydrolyze NADP(+), but not other NAD(+)-related molecules. Can activate neuronal cell death in response to stress. Regulates dendritic arborization through the MAPK4-JNK pathway. Involved in innate immune response: inhibits both TICAM1/TRIF- and MYD88-dependent activation of JUN/AP-1, TRIF-dependent activation of NF-kappa-B and IRF3, and the phosphorylation of MAPK14/p38. The polypeptide is NAD(+) hydrolase SARM1 (Sus scrofa (Pig)).